A 317-amino-acid chain; its full sequence is TPR repeat-containing thioredoxin TDX (317 aa).

Positions 1 to 48 (MATAGASSFEDEIMESDIELEGEAVEPDNDPPQKMGDPSVEVSDEKRD) are disordered. The segment covering 9–29 (FEDEIMESDIELEGEAVEPDN) has biased composition (acidic residues). TPR repeat units lie at residues 50–83 (AQLC…NPTS), 85–117 (IAYA…NPDS), and 119–151 (KGYK…DYDE). The region spanning 189–316 (EKQRKHAEEV…LERKVAQHGS (128 aa)) is the Thioredoxin domain. Residues cysteine 242 and cysteine 245 each act as nucleophile in the active site. A disulfide bridge connects residues cysteine 242 and cysteine 245.

The protein belongs to the thioredoxin family.

In terms of biological role, probable thiol-disulfide oxidoreductase that may participate in various redox reactions and act as chaperone under heat shock. May interact with HSP70 proteins through the TPR repeats. The sequence is that of TPR repeat-containing thioredoxin TDX from Oryza sativa subsp. japonica (Rice).